Reading from the N-terminus, the 301-residue chain is NAD kinase (301 aa).

The active-site Proton acceptor is the aspartate 81. NAD(+) is bound by residues aspartate 81–glycine 82, asparagine 155–glutamate 156, histidine 166, arginine 183, aspartate 185, threonine 196–serine 201, and glutamine 256.

This sequence belongs to the NAD kinase family. Requires a divalent metal cation as cofactor.

The protein resides in the cytoplasm. The enzyme catalyses NAD(+) + ATP = ADP + NADP(+) + H(+). Involved in the regulation of the intracellular balance of NAD and NADP, and is a key enzyme in the biosynthesis of NADP. Catalyzes specifically the phosphorylation on 2'-hydroxyl of the adenosine moiety of NAD to yield NADP. The protein is NAD kinase of Mannheimia succiniciproducens (strain KCTC 0769BP / MBEL55E).